The primary structure comprises 243 residues: Outer membrane protein A (243 aa).

5 beta stranded membrane passes run 1–8 (LAAKLSYP), 13–21 (LDIYTRLGG), 48–57 (PLAAVGVEYA), 62–69 (WATRLDYQ), and 88–96 (MLSLGVSYR). Repeat copies occupy residues 104-105 (AP), 106-107 (AP), 108-109 (AP), 110-111 (AP), and 112-113 (AP). The interval 104-113 (APAPAPAPAP) is 5 X 2 AA tandem repeats of A-P. The region spanning 115 to 243 (VETKLFTLKS…RRVEIEVKGI (129 aa)) is the OmpA-like domain. Cys215 and Cys229 are oxidised to a cystine.

This sequence belongs to the outer membrane OOP (TC 1.B.6) superfamily. OmpA family. As to quaternary structure, monomer and homodimer.

The protein localises to the cell outer membrane. Functionally, with TolR probably plays a role in maintaining the position of the peptidoglycan cell wall in the periplasm. Acts as a porin with low permeability that allows slow penetration of small solutes; an internal gate slows down solute passage. The sequence is that of Outer membrane protein A from Serratia odorifera.